Consider the following 287-residue polypeptide: 4-hydroxybenzoate octaprenyltransferase (287 aa).

The next 6 membrane-spanning stretches (helical) occupy residues 23–40, 98–118, 141–161, 163–183, 213–233, and 235–255; these read IGSL…WLAG, ILFV…NKMT, LPQF…YAAV, ESLP…TVAY, IIIG…GNIT, and LGIP…YQQI.

It belongs to the UbiA prenyltransferase family. Mg(2+) is required as a cofactor.

It localises to the cell inner membrane. It carries out the reaction all-trans-octaprenyl diphosphate + 4-hydroxybenzoate = 4-hydroxy-3-(all-trans-octaprenyl)benzoate + diphosphate. It functions in the pathway cofactor biosynthesis; ubiquinone biosynthesis. Its function is as follows. Catalyzes the prenylation of para-hydroxybenzoate (PHB) with an all-trans polyprenyl group. Mediates the second step in the final reaction sequence of ubiquinone-8 (UQ-8) biosynthesis, which is the condensation of the polyisoprenoid side chain with PHB, generating the first membrane-bound Q intermediate 3-octaprenyl-4-hydroxybenzoate. The sequence is that of 4-hydroxybenzoate octaprenyltransferase from Pectobacterium atrosepticum (strain SCRI 1043 / ATCC BAA-672) (Erwinia carotovora subsp. atroseptica).